Here is a 386-residue protein sequence, read N- to C-terminus: 2-isopropylmalate synthase (386 aa).

One can recognise a Pyruvate carboxyltransferase domain in the interval 15-269 (IRIFDTTLRD…ETNVKTWKLY (255 aa)). The a divalent metal cation site is built by Asp-24, His-207, His-209, and Asn-243.

The protein belongs to the alpha-IPM synthase/homocitrate synthase family. As to quaternary structure, homodimer. The cofactor is a divalent metal cation.

The catalysed reaction is 3-methyl-2-oxobutanoate + acetyl-CoA + H2O = (2S)-2-isopropylmalate + CoA + H(+). The protein operates within amino-acid biosynthesis; L-leucine biosynthesis; L-leucine from 3-methyl-2-oxobutanoate: step 1/4. Functionally, catalyzes the condensation of the acetyl group of acetyl-CoA with 3-methyl-2-oxobutanoate (2-oxoisovalerate) to form 3-carboxy-3-hydroxy-4-methylpentanoate (2-isopropylmalate). Carries out the first step of the leucine biosynthesis pathway. This chain is 2-isopropylmalate synthase (leuA), found in Saccharolobus solfataricus (strain ATCC 35092 / DSM 1617 / JCM 11322 / P2) (Sulfolobus solfataricus).